A 535-amino-acid polypeptide reads, in one-letter code: Glucose-6-phosphate isomerase (535 aa).

Glu-359 serves as the catalytic Proton donor. Residues His-390 and Lys-505 contribute to the active site.

The protein belongs to the GPI family.

The protein resides in the cytoplasm. The enzyme catalyses alpha-D-glucose 6-phosphate = beta-D-fructose 6-phosphate. The protein operates within carbohydrate biosynthesis; gluconeogenesis. It functions in the pathway carbohydrate degradation; glycolysis; D-glyceraldehyde 3-phosphate and glycerone phosphate from D-glucose: step 2/4. In terms of biological role, catalyzes the reversible isomerization of glucose-6-phosphate to fructose-6-phosphate. The polypeptide is Glucose-6-phosphate isomerase (Treponema pallidum (strain Nichols)).